A 551-amino-acid chain; its full sequence is Nucleobase-ascorbate transporter 3 (551 aa).

The segment at 1–30 is disordered; the sequence is MVETGHHHQHPPAPAAAGHPPVPSMAMARN. 12 consecutive transmembrane segments (helical) span residues 56 to 76, 92 to 111, 117 to 136, 158 to 178, 179 to 199, 202 to 222, 242 to 262, 306 to 326, 390 to 410, 412 to 432, 442 to 462, and 481 to 501; these read ETVVLAFQHYIVMLGTTVLIA, RVIQTILFMSGINTLLQTLI, TVMGVSFAYVLPVLSIIRDY, SLIISSFVNIIIGYGQAWGNL, IRIFSPIIVVPVVSVVSLGLF, GFPLLANCVEIGLPMLILLII, ALLVCLAIIWAFAAILTVSGA, VFGMFGAAIVASAESTGVFFA, FFMIFFSIFGKFGAFFASIPL, IFAGVYCILLGIVVAVGISFI, NMYVIGVSLFLSLSIAQYFLA, and DILNTIFASAPLVATILATIL.

The protein belongs to the nucleobase:cation symporter-2 (NCS2) (TC 2.A.40) family. Expressed in the apical meristem 4 days after imbibition (DAI). Expressed in the major veins of rosette leaves and pedicels. Expressed in the root central cylinder, root meristems, root tips and lateral root primordia.

It localises to the membrane. The protein is Nucleobase-ascorbate transporter 3 (NAT3) of Arabidopsis thaliana (Mouse-ear cress).